The chain runs to 430 residues: MISKTHTFVILASGHGRRMNSDLPKVLHKIGSFSMLQHVIYNAKQLNPENIAVVVDQPLIERLKCFKDIQLITQELTLGTGDAVKTAMRNLRELPDSSIVVVQYGDTPLIKSSTITKMISYLEGKALVCLGFRTSNKEYGRLIIENGSLREIVEAKSDKNNHEEFLANAGIMVACAKNLRELVEKIECNSSTHEYYLTDIVSIAVKSNLNVGYVITGGEEATGINNRNDLIKAEFYFQENKRKIFTDSGVTLVAPETVFFSLDTQIARDSVIYPYVFFGTGVKIESGAKILPFSHLENCLIKSNAEVGPFTRIRGNTTIGNKAKIGNFVEVKTSEVGQNTRIKHLSYIGNAKVGQESNIGAGTIVCNYDGKNKHETNIGSNCFVGANSSLIAPLNIHDESVIAAGSVIVEDVPEKSLAIAREKQVTKRIK.

The tract at residues M1–R227 is pyrophosphorylase. Residues K25, Q74, G79–T80, Y104–D106, G140, E154, N168, and N225 each bind UDP-N-acetyl-alpha-D-glucosamine. D106 provides a ligand contact to Mg(2+). N225 provides a ligand contact to Mg(2+). The linker stretch occupies residues N228 to S248. Residues G249–K430 form an N-acetyltransferase region. 2 residues coordinate UDP-N-acetyl-alpha-D-glucosamine: R314 and K332. H344 functions as the Proton acceptor in the catalytic mechanism. Y347 and N358 together coordinate UDP-N-acetyl-alpha-D-glucosamine. Residues A361, N367–Y368, A404, and R421 contribute to the acetyl-CoA site.

This sequence in the N-terminal section; belongs to the N-acetylglucosamine-1-phosphate uridyltransferase family. In the C-terminal section; belongs to the transferase hexapeptide repeat family. Homotrimer. Mg(2+) serves as cofactor.

It is found in the cytoplasm. The catalysed reaction is alpha-D-glucosamine 1-phosphate + acetyl-CoA = N-acetyl-alpha-D-glucosamine 1-phosphate + CoA + H(+). It carries out the reaction N-acetyl-alpha-D-glucosamine 1-phosphate + UTP + H(+) = UDP-N-acetyl-alpha-D-glucosamine + diphosphate. It participates in nucleotide-sugar biosynthesis; UDP-N-acetyl-alpha-D-glucosamine biosynthesis; N-acetyl-alpha-D-glucosamine 1-phosphate from alpha-D-glucosamine 6-phosphate (route II): step 2/2. The protein operates within nucleotide-sugar biosynthesis; UDP-N-acetyl-alpha-D-glucosamine biosynthesis; UDP-N-acetyl-alpha-D-glucosamine from N-acetyl-alpha-D-glucosamine 1-phosphate: step 1/1. Its pathway is bacterial outer membrane biogenesis; LPS lipid A biosynthesis. Catalyzes the last two sequential reactions in the de novo biosynthetic pathway for UDP-N-acetylglucosamine (UDP-GlcNAc). The C-terminal domain catalyzes the transfer of acetyl group from acetyl coenzyme A to glucosamine-1-phosphate (GlcN-1-P) to produce N-acetylglucosamine-1-phosphate (GlcNAc-1-P), which is converted into UDP-GlcNAc by the transfer of uridine 5-monophosphate (from uridine 5-triphosphate), a reaction catalyzed by the N-terminal domain. In Wolbachia pipientis wMel, this protein is Bifunctional protein GlmU.